We begin with the raw amino-acid sequence, 82 residues long: Opistoporin-1 (82 aa).

A signal peptide spans 1 to 22; the sequence is MNRKLLFVTLMVTMLVMQPSEG. Residues 67-82 constitute a propeptide that is removed on maturation; that stretch reads EAGQMPFDEFMDILYE.

In terms of tissue distribution, expressed by the venom gland.

It is found in the secreted. The protein localises to the target cell membrane. Functionally, at high concentrations, acts as a pore former in cellular membranes and causes the leakage of the cells. At submicromolar concentrations, degranulates granulocytes and has a weak hemolytic activity against human erythrocytes. Also strongly inhibits the production of superoxide anions. Has a strong antibacterial activity against Gram-negative bacteria but is less active against Gram-positive bacteria. Also has antifungal activity. The sequence is that of Opistoporin-1 from Opistophthalmus carinatus (African yellow leg scorpion).